We begin with the raw amino-acid sequence, 138 residues long: Large ribosomal subunit protein bL17 (138 aa).

This sequence belongs to the bacterial ribosomal protein bL17 family. As to quaternary structure, part of the 50S ribosomal subunit. Contacts protein L32.

This chain is Large ribosomal subunit protein bL17, found in Buchnera aphidicola subsp. Schizaphis graminum (strain Sg).